The primary structure comprises 63 residues: Toxin Tx7335 (63 aa).

Cystine bridges form between Cys-3/Cys-24, Cys-17/Cys-39, Cys-25/Cys-55, and Cys-56/Cys-61.

Post-translationally, contains 4 disulfide bonds. Expressed by the venom gland.

The protein resides in the secreted. Activates bacterial pH-gated potassium channel KcsA by binding to its extracellular domain, probably at a site different from channel inhibitors. Increases both mean open time and open probability of KscA. The protein is Toxin Tx7335 of Dendroaspis angusticeps (Eastern green mamba).